The primary structure comprises 161 residues: Allophycocyanin alpha chain (161 aa).

Asn-71 carries the N4-methylasparagine modification. Residue Cys-81 participates in (2R,3E)-phycocyanobilin binding.

It belongs to the phycobiliprotein family. In terms of assembly, heterodimer of an alpha and a beta chain. In terms of processing, contains one covalently linked phycocyanobilin chromophore.

It localises to the plastid. The protein localises to the cyanelle thylakoid membrane. Light-harvesting photosynthetic bile pigment-protein from the phycobiliprotein complex. Allophycocyanin has a maximum absorption at approximately 650 nanometers. The chain is Allophycocyanin alpha chain (apcA) from Cyanophora paradoxa.